A 110-amino-acid polypeptide reads, in one-letter code: Large ribosomal subunit protein P1 (110 aa).

Residue Ala2 is modified to Blocked amino end (Ala). Over residues 69-83 the composition is skewed to low complexity; the sequence is AAPAAGGAAAATEAP. The interval 69 to 110 is disordered; that stretch reads AAPAAGGAAAATEAPAAKEEKKEEKKEESEEEDEDMGFGLFD. The span at 84-96 shows a compositional bias: basic and acidic residues; the sequence is AAKEEKKEEKKEE. Residue Ser97 is modified to Phosphoserine; in form eL12'-P.

Part of the ribosomal stalk of the large ribosomal subunit; P1 and P2 exist as dimers which assemble on the P0 scaffold. In terms of processing, phosphorylation of Ser-97 converts eL12' to eL12'-P.

Functionally, plays an important role in the elongation step of protein synthesis. The chain is Large ribosomal subunit protein P1 from Artemia salina (Brine shrimp).